A 185-amino-acid polypeptide reads, in one-letter code: Large ribosomal subunit protein bL25 (185 aa).

Belongs to the bacterial ribosomal protein bL25 family. CTC subfamily. As to quaternary structure, part of the 50S ribosomal subunit; part of the 5S rRNA/L5/L18/L25 subcomplex. Contacts the 5S rRNA. Binds to the 5S rRNA independently of L5 and L18.

This is one of the proteins that binds to the 5S RNA in the ribosome where it forms part of the central protuberance. The protein is Large ribosomal subunit protein bL25 of Chlamydia caviae (strain ATCC VR-813 / DSM 19441 / 03DC25 / GPIC) (Chlamydophila caviae).